A 711-amino-acid chain; its full sequence is Nucleolin (711 aa).

Residues 1-304 (MVKLAKAGKN…KKQKVEGTEP (304 aa)) are disordered. Residues K9, K15, and K16 each carry the N6-acetyllysine modification. Over residues 24–43 (VEEDSEDEEMSEDEEDDSSG) the composition is skewed to acidic residues. A phosphoserine mark is found at S28, S34, S41, and S42. The span at 56–107 (AAATSAKKVVVSPTKKVAVATPAKKAAVTPGKKAAATPAKKTVTPAKAVATP) shows a compositional bias: low complexity. Repeat 1 spans residues 58–65 (ATSAKKVV). The interval 58–135 (ATSAKKVVVS…GAAIPAKGAK (78 aa)) is 8 X 8 AA tandem repeats of X-T-P-X-K-K-X-X. At S67 the chain carries Phosphoserine. 4 positions are modified to phosphothreonine: T69, T76, T84, and T92. A run of 3 repeats spans residues 75–82 (ATPAKKAA), 83–90 (VTPGKKAA), and 91–98 (ATPAKKTV). K96 is subject to N6-acetyllysine. Residue T99 is modified to Phosphothreonine. A 5; truncated repeat occupies 99 to 104 (TPAKAV). N6-acetyllysine is present on K102. Repeat 6 spans residues 105–112 (ATPGKKGA). T106 carries the phosphothreonine modification. N6-acetyllysine is present on K109. T113 is subject to Phosphothreonine. Residue K116 is modified to N6-acetyllysine. 2 consecutive repeat copies span residues 120 to 127 (ATPGKKGA) and 128 to 135 (AIPAKGAK). Residue T121 is modified to Phosphothreonine. The span at 122–137 (PGKKGAAIPAKGAKNG) shows a compositional bias: low complexity. An N6-acetyllysine modification is found at K124. 4 positions are modified to phosphoserine: S145, S153, S184, and S207. 2 stretches are compositionally biased toward acidic residues: residues 145–171 (SDEEEEDDSEEDDEDDEDEDEDEDEIE) and 184–212 (SEDEDDEDDEDDEDEDDDDEEDDSEEEAM). T215 carries the post-translational modification Phosphothreonine. Acidic residues predominate over residues 235 to 273 (EDEDEEEDDEDEDDDDDEDDEDEDDDDEDEEEEEEEEEP). Basic and acidic residues predominate over residues 274–301 (VKEAPGKRKKEMAKQKAAPEAKKQKVEG). Residue K298 forms a Glycyl lysine isopeptide (Lys-Gly) (interchain with G-Cter in SUMO1); alternate linkage. A Glycyl lysine isopeptide (Lys-Gly) (interchain with G-Cter in SUMO2); alternate cross-link involves residue K298. T302 bears the Phosphothreonine mark. RRM domains follow at residues 308 to 384 (FNLF…KPKG) and 394 to 467 (RTLL…YTGE). K319 carries the post-translational modification N6-acetyllysine. Residue K325 forms a Glycyl lysine isopeptide (Lys-Gly) (interchain with G-Cter in SUMO1); alternate linkage. K325 is covalently cross-linked (Glycyl lysine isopeptide (Lys-Gly) (interchain with G-Cter in SUMO2); alternate). K349 bears the N6-acetyllysine mark. Position 357 is a phosphoserine (S357). Residue T368 is modified to Phosphothreonine. K371 participates in a covalent cross-link: Glycyl lysine isopeptide (Lys-Gly) (interchain with G-Cter in SUMO2). A Glycyl lysine isopeptide (Lys-Gly) (interchain with G-Cter in SUMO2); alternate cross-link involves residue K378. Residue K378 is modified to N6-acetyllysine; alternate. 2 positions are modified to N6-acetyllysine: K399 and K404. The residue at position 406 (T406) is a Phosphothreonine. N6-acetyllysine occurs at positions 428 and 445. Residues S459 and S461 each carry the phosphoserine modification. N6-acetyllysine occurs at positions 468 and 478. Positions 487–561 (KTLVLSNLSY…RAIRLELQGP (75 aa)) constitute an RRM 3 domain. K514 is covalently cross-linked (Glycyl lysine isopeptide (Lys-Gly) (interchain with G-Cter in SUMO2); alternate). At K514 the chain carries N6-acetyllysine; alternate. Residue K522 is modified to N6-acetyllysine. Phosphoserine is present on S564. An N6-acetyllysine modification is found at K573. One can recognise an RRM 4 domain in the interval 573-648 (KTLFVKGLSE…NKVTLDWAKP (76 aa)). A Glycyl lysine isopeptide (Lys-Gly) (interchain with G-Cter in SUMO2); alternate cross-link involves residue K578. An N6-acetyllysine; alternate modification is found at K578. A Phosphoserine modification is found at S581. A Glycyl lysine isopeptide (Lys-Gly) (interchain with G-Cter in SUMO1); alternate cross-link involves residue K590. Residue K590 forms a Glycyl lysine isopeptide (Lys-Gly) (interchain with G-Cter in SUMO2); alternate linkage. 2 positions are modified to phosphoserine: S592 and S620. K625 is covalently cross-linked (Glycyl lysine isopeptide (Lys-Gly) (interchain with G-Cter in SUMO2)). The interval 641 to 711 (VTLDWAKPKG…KPQGKKTKFE (71 aa)) is disordered. K647 carries the N6-acetyllysine modification. Gly residues predominate over residues 651 to 697 (EGGFGGRGGGRGGFGGRGGGRGGRGGFGGRGRGGFGGRGGFRGGRGG). 9 positions are modified to asymmetric dimethylarginine: R657, R661, R667, R671, R674, R680, R682, R688, and R692. The residue at position 695 (R695) is an Asymmetric dimethylarginine; alternate. R695 is subject to Omega-N-methylarginine; alternate. Residues 698 to 711 (GGDHKPQGKKTKFE) are compositionally biased toward basic and acidic residues.

As to quaternary structure, identified in a IGF2BP1-dependent mRNP granule complex containing untranslated mRNAs. Component of the SWAP complex that consists of NPM1, NCL/nucleolin, PARP1 and SWAP70. Component of a complex which is at least composed of HTATSF1/Tat-SF1, the P-TEFb complex components CDK9 and CCNT1, RNA polymerase II, SUPT5H, and NCL/nucleolin. Interacts with AICDA. Interacts with APTX. Interacts with C1QBP. Interacts with ERBB4. Interacts (via C-terminus) with FMR1 isoform 6 (via N-terminus). Interacts with GZF1; this interaction is important for nucleolar localization of GZF1. Interacts with NSUN2. Interacts with NVL. Interacts (via N-terminus domain) with SETX. Interacts (via RRM1 and C-terminal RRM4/Arg/Gly-rich domains) with TERT; the interaction is important for nucleolar localization of TERT. Interacts with WDR46. Interacts with ZFP36. Interacts with LRRC34. Interacts with RRP1B. Interacts with HNRNPU; this interaction occurs during mitosis. Interacts with RIOK1; RIOK1 recruits NCL to PRMT5 for symmetrically methylation. Interacts with ZBTB7B. Interacts with MDK; this interaction promotes NCL clustering and lateral movements of this complex into lipid rafts leading to MDK internalization. Interacts with HDGF. Interacts with ALKBH2. Interacts with IGFBP5; this interaction is necessary for IGFBP5 localization to the nucleus. In terms of processing, some glutamate residues are glycylated by TTLL8. This modification occurs exclusively on glutamate residues and results in a glycine chain on the gamma-carboxyl group. Post-translationally, symmetrically methylated by PRMT5.

Its subcellular location is the nucleus. It localises to the nucleolus. It is found in the cytoplasm. Functionally, nucleolin is the major nucleolar protein of growing eukaryotic cells. It is found associated with intranucleolar chromatin and pre-ribosomal particles. It induces chromatin decondensation by binding to histone H1. It is thought to play a role in pre-rRNA transcription and ribosome assembly. May play a role in the process of transcriptional elongation. Binds RNA oligonucleotides with 5'-UUAGGG-3' repeats more tightly than the telomeric single-stranded DNA 5'-TTAGGG-3' repeats. This is Nucleolin (NCL) from Macaca fascicularis (Crab-eating macaque).